Here is a 692-residue protein sequence, read N- to C-terminus: NADH-ubiquinone oxidoreductase chain 5 (692 aa).

Helical transmembrane passes span 5–23, 30–52, 81–103, 112–129, 133–155, 168–190, 200–222, 243–262, 272–294, 301–319, 329–351, 364–386, 409–431, 452–471, 511–528, 535–557, and 615–637; these read IIIL…GRKV, ILGC…EVGF, LTVS…SIGY, RFFS…ILVT, YLLM…SFWF, FLTN…WSLG, LAPY…GAMA, VSAL…LLIR, TVLL…IGLF, IIAY…AIGL, LINH…HAVV, SFLP…FPFM, NVYF…VIYL, IFLS…FGYL, LLPF…IVYY, VVDF…RFLV, and YALY…SIFF.

The protein belongs to the complex I subunit 5 family.

It localises to the mitochondrion inner membrane. It catalyses the reaction a ubiquinone + NADH + 5 H(+)(in) = a ubiquinol + NAD(+) + 4 H(+)(out). Functionally, core subunit of the mitochondrial membrane respiratory chain NADH dehydrogenase (Complex I) that is believed to belong to the minimal assembly required for catalysis. Complex I functions in the transfer of electrons from NADH to the respiratory chain. The immediate electron acceptor for the enzyme is believed to be ubiquinone. The polypeptide is NADH-ubiquinone oxidoreductase chain 5 (nd5) (Hypocrea jecorina (Trichoderma reesei)).